Here is a 161-residue protein sequence, read N- to C-terminus: Cytochrome c-type biogenesis protein CcmE (161 aa).

Topologically, residues 1–8 (MNPVRKKR) are cytoplasmic. A helical; Signal-anchor for type II membrane protein transmembrane segment spans residues 9–29 (LYIVLAILCGVSIAVALALTA). The Periplasmic segment spans residues 30 to 161 (LQENINLFYT…AKGYQQESAQ (132 aa)). Residues histidine 124 and tyrosine 128 each contribute to the heme site.

The protein belongs to the CcmE/CycJ family.

It is found in the cell inner membrane. Functionally, heme chaperone required for the biogenesis of c-type cytochromes. Transiently binds heme delivered by CcmC and transfers the heme to apo-cytochromes in a process facilitated by CcmF and CcmH. The polypeptide is Cytochrome c-type biogenesis protein CcmE (Ectopseudomonas mendocina (strain ymp) (Pseudomonas mendocina)).